The sequence spans 238 residues: Demethylmenaquinone methyltransferase (238 aa).

Residues T60, D81, and 108 to 109 (NA) contribute to the S-adenosyl-L-methionine site.

It belongs to the class I-like SAM-binding methyltransferase superfamily. MenG/UbiE family.

The enzyme catalyses a 2-demethylmenaquinol + S-adenosyl-L-methionine = a menaquinol + S-adenosyl-L-homocysteine + H(+). It participates in quinol/quinone metabolism; menaquinone biosynthesis; menaquinol from 1,4-dihydroxy-2-naphthoate: step 2/2. Its function is as follows. Methyltransferase required for the conversion of demethylmenaquinol (DMKH2) to menaquinol (MKH2). The chain is Demethylmenaquinone methyltransferase from Oceanobacillus iheyensis (strain DSM 14371 / CIP 107618 / JCM 11309 / KCTC 3954 / HTE831).